The chain runs to 435 residues: Enolase (435 aa).

Residues His155 and Glu164 each coordinate substrate. The active-site Proton donor is the Glu205. Positions 243, 292, and 319 each coordinate Mg(2+). Residues Glu292, Asp319, Lys344, 371–374, and Lys395 contribute to the substrate site; that span reads SHRS. The Proton acceptor role is filled by Lys344.

It belongs to the enolase family. As to quaternary structure, homooctamer. Mg(2+) serves as cofactor.

Its subcellular location is the cytoplasm. It is found in the secreted. The protein localises to the cell surface. The catalysed reaction is (2R)-2-phosphoglycerate = phosphoenolpyruvate + H2O. It participates in carbohydrate degradation; glycolysis; pyruvate from D-glyceraldehyde 3-phosphate: step 4/5. Functionally, catalyzes the reversible conversion of 2-phosphoglycerate (2-PG) into phosphoenolpyruvate (PEP). It is essential for the degradation of carbohydrates via glycolysis. 'Moonlights' as a plasminogen receptor and plasmin activator. Binds host (human) plasminogen in vitro; enhances the activity of host tissue-specific plasminogen activator (tPA). The chain is Enolase from Streptococcus pyogenes serotype M1.